The following is a 415-amino-acid chain: Serine hydroxymethyltransferase 1 (415 aa).

Residues Leu122 and 126–128 (GHL) each bind (6S)-5,6,7,8-tetrahydrofolate. N6-(pyridoxal phosphate)lysine is present on Lys230.

Belongs to the SHMT family. In terms of assembly, homodimer. It depends on pyridoxal 5'-phosphate as a cofactor.

The protein localises to the cytoplasm. It catalyses the reaction (6R)-5,10-methylene-5,6,7,8-tetrahydrofolate + glycine + H2O = (6S)-5,6,7,8-tetrahydrofolate + L-serine. The protein operates within one-carbon metabolism; tetrahydrofolate interconversion. It functions in the pathway amino-acid biosynthesis; glycine biosynthesis; glycine from L-serine: step 1/1. Catalyzes the reversible interconversion of serine and glycine with tetrahydrofolate (THF) serving as the one-carbon carrier. This reaction serves as the major source of one-carbon groups required for the biosynthesis of purines, thymidylate, methionine, and other important biomolecules. Also exhibits THF-independent aldolase activity toward beta-hydroxyamino acids, producing glycine and aldehydes, via a retro-aldol mechanism. This is Serine hydroxymethyltransferase 1 from Cupriavidus pinatubonensis (strain JMP 134 / LMG 1197) (Cupriavidus necator (strain JMP 134)).